Here is a 235-residue protein sequence, read N- to C-terminus: Purine nucleoside phosphorylase DeoD-type (235 aa).

H4 is an a purine D-ribonucleoside binding site. Residues G20, R24, R43, and 87–90 (RVGT) each bind phosphate. A purine D-ribonucleoside is bound by residues 179 to 181 (EME) and 203 to 204 (SN).

It belongs to the PNP/UDP phosphorylase family. Homohexamer; trimer of homodimers.

It catalyses the reaction a purine D-ribonucleoside + phosphate = a purine nucleobase + alpha-D-ribose 1-phosphate. It carries out the reaction a purine 2'-deoxy-D-ribonucleoside + phosphate = a purine nucleobase + 2-deoxy-alpha-D-ribose 1-phosphate. Functionally, catalyzes the reversible phosphorolytic breakdown of the N-glycosidic bond in the beta-(deoxy)ribonucleoside molecules, with the formation of the corresponding free purine bases and pentose-1-phosphate. This is Purine nucleoside phosphorylase DeoD-type from Levilactobacillus brevis (strain ATCC 367 / BCRC 12310 / CIP 105137 / JCM 1170 / LMG 11437 / NCIMB 947 / NCTC 947) (Lactobacillus brevis).